The chain runs to 841 residues: Beta-adaptin-like protein A (841 aa).

Disordered regions lie at residues 1 to 25 (MAPPAASQRYPSPSQPSGKSEVSDL) and 650 to 671 (DENKGVSNNNGSAYTAPSLESS). Polar residues-rich tracts occupy residues 9 to 25 (RYPSPSQPSGKSEVSDL) and 654 to 671 (GVSNNNGSAYTAPSLESS).

It belongs to the adaptor complexes large subunit family. In terms of assembly, adaptor protein complexes are heterotetramers composed of two large adaptins (beta-type subunit and alpha-type or delta-type or epsilon-type or gamma-type subunit), a medium adaptin (mu-type subunit) and a small adaptin (sigma-type subunit). Interacts with AHK2.

The protein localises to the golgi apparatus. The protein resides in the trans-Golgi network. It localises to the cytoplasmic vesicle. It is found in the clathrin-coated vesicle membrane. Its function is as follows. Subunit of clathrin-associated adaptor protein complex that plays a role in protein sorting in the late-Golgi/trans-Golgi network (TGN) and/or endosomes. The AP complexes mediate both the recruitment of clathrin to membranes and the recognition of sorting signals within the cytosolic tails of transmembrane cargo molecules. This is Beta-adaptin-like protein A (BETAA-AD) from Arabidopsis thaliana (Mouse-ear cress).